The primary structure comprises 398 residues: Bombesin receptor subtype-3 (398 aa).

At 1–40 (MAQRQPHSPNQTLISITNDTESSSVVSNDNTNKGRSGDNS) the chain is on the extracellular side. N-linked (GlcNAc...) asparagine glycosylation is found at Asn-10 and Asn-18. The chain crosses the membrane as a helical span at residues 41-62 (PGIEALCAIYITYAVIISVGIL). Topologically, residues 63 to 81 (GNAILIKVFFKTKSMQTVP) are cytoplasmic. A helical transmembrane segment spans residues 82–102 (NIFITSLAFGDLLLLLTCVPV). Topologically, residues 103-120 (DATHYLAEGWLFGRIGCK) are extracellular. A disulfide bridge connects residues Cys-119 and Cys-202. The helical transmembrane segment at 121–142 (VLSFIRLTSVGVSVFTLTILSA) threads the bilayer. The Cytoplasmic segment spans residues 143-162 (DRYKAVVKPLERQPSNAILK). Residues 163-183 (TCIKAGCVWIVSMIFALPEAI) traverse the membrane as a helical segment. At 184–219 (FSNVYSFRDPNKNVTFESCTSYPVSKKLLQEIHSLL) the chain is on the extracellular side. A helical transmembrane segment spans residues 220–240 (CFLVFYIIPLSIISVYYSLIA). The Cytoplasmic portion of the chain corresponds to 241-271 (RTLYKSTLNIPTEEQGHARKQIESRKRIART). The helical transmembrane segment at 272 to 292 (VLVLVALFALCWLPNHLLYLY) threads the bilayer. Topologically, residues 293 to 312 (HSFTSQTYVDPSAMHFIFTI) are extracellular. The helical transmembrane segment at 313-332 (FSRVLAFSNSCVNPFALYWL) threads the bilayer. Residues 333–398 (SKTFQKHFKA…CSVKQAEDRV (66 aa)) are Cytoplasmic-facing. Residue Cys-346 is the site of S-palmitoyl cysteine attachment.

This sequence belongs to the G-protein coupled receptor 1 family. As to quaternary structure, interacts with C6orf89.

The protein resides in the cell membrane. Its function is as follows. Role in sperm cell division, maturation, or function. This receptor mediates its action by association with G proteins that activate a phosphatidylinositol-calcium second messenger system. In Macaca mulatta (Rhesus macaque), this protein is Bombesin receptor subtype-3 (BRS3).